A 138-amino-acid polypeptide reads, in one-letter code: Acidic phospholipase A2 Ts-A1 (138 aa).

Residues 1–16 (MRTLWIMAVLQVGVEG) form the signal peptide. 7 disulfide bridges follow: Cys-42-Cys-131, Cys-44-Cys-60, Cys-59-Cys-111, Cys-65-Cys-138, Cys-66-Cys-104, Cys-73-Cys-97, and Cys-91-Cys-102. Phe-43, Gly-45, and Gly-47 together coordinate Ca(2+). The active site involves His-63. Residue Asp-64 participates in Ca(2+) binding. Asp-105 is a catalytic residue.

Ca(2+) is required as a cofactor. As to expression, expressed by the venom gland.

Its subcellular location is the secreted. The enzyme catalyses a 1,2-diacyl-sn-glycero-3-phosphocholine + H2O = a 1-acyl-sn-glycero-3-phosphocholine + a fatty acid + H(+). Functionally, snake venom phospholipase A2 (PLA2) that shows a moderate inhibition of ADP-induced human platelet aggregation when tested on platelet rich plasma. Exhibits high hydrolytic activities and prefers the anionic micelles (dPPC with deoxycholate) to the zwitterionic micelles (dPPC with Triton X-100). PLA2 catalyzes the calcium-dependent hydrolysis of the 2-acyl groups in 3-sn-phosphoglycerides. The sequence is that of Acidic phospholipase A2 Ts-A1 from Trimeresurus stejnegeri (Chinese green tree viper).